The chain runs to 672 residues: Flap endonuclease 1 (672 aa).

An N-domain region spans residues 1–106; that stretch reads MGIKGLTKFI…SELEKRGEKR (106 aa). D34 contributes to the Mg(2+) binding site. Positions 47 and 72 each coordinate DNA. Mg(2+) is bound by residues D88, E160, E162, D181, and D183. The tract at residues 124-266 is I-domain; sequence EIKKQSGRTV…KTAYNLIKEY (143 aa). Position 160 (E160) interacts with DNA. Residues G244 and D246 each coordinate DNA. A Mg(2+)-binding site is contributed by D246. Residues 349-357 form an interaction with PCNA region; sequence TQRRLDNFF. A disordered region spans residues 371–610; that stretch reads ETKKEQTLPA…EDSPNSYNNI (240 aa). 3 stretches are compositionally biased toward basic and acidic residues: residues 413–493, 502–526, and 535–548; these read MKEE…KKSL, DSDK…EKIN, and DHSR…KDNI. Positions 549–584 are enriched in low complexity; sequence SDINNNNNNNNSSSNNNNISNNHFNSVSSNSTFNSS. Residues 587 to 603 are compositionally biased toward basic and acidic residues; it reads LKSEDTLKSNSPLKEDS.

This sequence belongs to the XPG/RAD2 endonuclease family. FEN1 subfamily. As to quaternary structure, interacts with PCNA1 and PCNA2. Three molecules of FEN1 bind to one PCNA trimer with each molecule binding to one PCNA monomer. PCNA stimulates the nuclease activity without altering cleavage specificity. It depends on Mg(2+) as a cofactor. Post-translationally, phosphorylated. Phosphorylation upon DNA damage induces relocalization to the nuclear plasma.

Its subcellular location is the nucleus. The protein resides in the nucleolus. It is found in the nucleoplasm. It localises to the mitochondrion. Structure-specific nuclease with 5'-flap endonuclease and 5'-3' exonuclease activities involved in DNA replication and repair. During DNA replication, cleaves the 5'-overhanging flap structure that is generated by displacement synthesis when DNA polymerase encounters the 5'-end of a downstream Okazaki fragment. It enters the flap from the 5'-end and then tracks to cleave the flap base, leaving a nick for ligation. Also involved in the long patch base excision repair (LP-BER) pathway, by cleaving within the apurinic/apyrimidinic (AP) site-terminated flap. Acts as a genome stabilization factor that prevents flaps from equilibrating into structures that lead to duplications and deletions. Also possesses 5'-3' exonuclease activity on nicked or gapped double-stranded DNA, and exhibits RNase H activity. Also involved in replication and repair of rDNA and in repairing mitochondrial DNA. This Plasmodium falciparum (isolate 3D7) protein is Flap endonuclease 1.